The sequence spans 273 residues: Formamidopyrimidine-DNA glycosylase (273 aa).

Pro2 acts as the Schiff-base intermediate with DNA in catalysis. The active-site Proton donor is the Glu3. Residue Lys59 is the Proton donor; for beta-elimination activity of the active site. Positions 92 and 111 each coordinate DNA. An FPG-type zinc finger spans residues 239 to 273 (KVYGKTDEPCVVCGKPIEKIKLNGRGTHFCPNCQK). Arg263 acts as the Proton donor; for delta-elimination activity in catalysis.

The protein belongs to the FPG family. As to quaternary structure, monomer. The cofactor is Zn(2+).

The catalysed reaction is Hydrolysis of DNA containing ring-opened 7-methylguanine residues, releasing 2,6-diamino-4-hydroxy-5-(N-methyl)formamidopyrimidine.. It catalyses the reaction 2'-deoxyribonucleotide-(2'-deoxyribose 5'-phosphate)-2'-deoxyribonucleotide-DNA = a 3'-end 2'-deoxyribonucleotide-(2,3-dehydro-2,3-deoxyribose 5'-phosphate)-DNA + a 5'-end 5'-phospho-2'-deoxyribonucleoside-DNA + H(+). Involved in base excision repair of DNA damaged by oxidation or by mutagenic agents. Acts as a DNA glycosylase that recognizes and removes damaged bases. Has a preference for oxidized purines, such as 7,8-dihydro-8-oxoguanine (8-oxoG). Has AP (apurinic/apyrimidinic) lyase activity and introduces nicks in the DNA strand. Cleaves the DNA backbone by beta-delta elimination to generate a single-strand break at the site of the removed base with both 3'- and 5'-phosphates. The sequence is that of Formamidopyrimidine-DNA glycosylase from Listeria monocytogenes serotype 4b (strain F2365).